Here is a 305-residue protein sequence, read N- to C-terminus: Protoheme IX farnesyltransferase (305 aa).

The next 9 membrane-spanning stretches (helical) occupy residues 31 to 51 (VMSL…YSVH), 52 to 72 (PFIA…AGAI), 96 to 118 (VIES…FFMA), 122 to 144 (NLLA…TIWL), 151 to 171 (NIVI…AAVS), 180 to 200 (ILFL…ALFC), 225 to 245 (ILIY…IGMN), 247 to 267 (FIYL…AGSL), and 281 to 301 (FAYS…TNTI).

The protein belongs to the UbiA prenyltransferase family. Protoheme IX farnesyltransferase subfamily.

Its subcellular location is the cell inner membrane. The enzyme catalyses heme b + (2E,6E)-farnesyl diphosphate + H2O = Fe(II)-heme o + diphosphate. Its pathway is porphyrin-containing compound metabolism; heme O biosynthesis; heme O from protoheme: step 1/1. Its function is as follows. Converts heme B (protoheme IX) to heme O by substitution of the vinyl group on carbon 2 of heme B porphyrin ring with a hydroxyethyl farnesyl side group. In Rickettsia peacockii (strain Rustic), this protein is Protoheme IX farnesyltransferase.